The following is a 207-amino-acid chain: MTFVENRIYLASRSPRRQELLKQIGVDFMVLPLREALPRIPDVDETPLPQESPPEYVERIARVKAETGRKRMSERGWADFPVLGADTAVVLNGRIFGKPENPLHAKQMLRALSGQIHEVLTAAAVAAGNGTRVCLSRSSVRFRNLGEQEIDHYLACDEAYDKAGAYAIQGRAAVFISGISGSYSGVVGLPLFETAQLLEESAIRIFQ.

The active-site Proton acceptor is Asp86.

It belongs to the Maf family. YhdE subfamily. A divalent metal cation is required as a cofactor.

It is found in the cytoplasm. The catalysed reaction is dTTP + H2O = dTMP + diphosphate + H(+). The enzyme catalyses UTP + H2O = UMP + diphosphate + H(+). Its function is as follows. Nucleoside triphosphate pyrophosphatase that hydrolyzes dTTP and UTP. May have a dual role in cell division arrest and in preventing the incorporation of modified nucleotides into cellular nucleic acids. This Nitrosospira multiformis (strain ATCC 25196 / NCIMB 11849 / C 71) protein is dTTP/UTP pyrophosphatase.